We begin with the raw amino-acid sequence, 590 residues long: NADH-ubiquinone oxidoreductase chain 5 (590 aa).

15 helical membrane passes run 1–21, 31–51, 77–97, 104–124, 130–150, 167–187, 190–210, 230–250, 261–281, 314–336, 355–375, 398–418, 439–461, 466–486, and 568–588; these read MNLI…MSIM, LMVL…NNEL, LLFT…SLWY, INKF…IITA, LFIG…WWHG, IGDI…SINM, LMIQ…AAAT, TPVS…FLLI, IMLT…AAAA, AFLH…GSYI, LPMT…MPFL, IMIT…IMLF, HPLA…STLQ, VTMP…GVLL, and MIKN…LFIM.

This sequence belongs to the complex I subunit 5 family.

The protein localises to the mitochondrion inner membrane. The enzyme catalyses a ubiquinone + NADH + 5 H(+)(in) = a ubiquinol + NAD(+) + 4 H(+)(out). Functionally, core subunit of the mitochondrial membrane respiratory chain NADH dehydrogenase (Complex I) that is believed to belong to the minimal assembly required for catalysis. Complex I functions in the transfer of electrons from NADH to the respiratory chain. The immediate electron acceptor for the enzyme is believed to be ubiquinone. The sequence is that of NADH-ubiquinone oxidoreductase chain 5 (MT-ND5) from Lycodon semicarinatus (Ryukyu odd-tooth snake).